The chain runs to 340 residues: CMP-sialic acid transporter 1 (340 aa).

Over 1–5 (MAATP) the chain is Cytoplasmic. Residues 6–26 (WYFVAVLLTILTSSQGILTTL) traverse the membrane as a helical segment. The Lumenal portion of the chain corresponds to 27-36 (SQSDGGYKYD). Residues 37-57 (YATVPFLAEVFKLIISGLFLW) traverse the membrane as a helical segment. At 58 to 78 (REMRTSSSTTSRITTDWKSVR) the chain is on the cytoplasmic side. The chain crosses the membrane as a helical span at residues 79–99 (LFVIPSLIYLIHNNVQFATLT). Topologically, residues 100–102 (YVD) are lumenal. The chain crosses the membrane as a helical span at residues 103–125 (TSTYQIMGNLKIVTTGILFRLFL). Over 126–168 (KRKLSKLQWMAIGLLAVGTTTSQVKGCGEASCDSLFTAPIQGY) the chain is Cytoplasmic. A helical transmembrane segment spans residues 169–189 (LLGILSAGLSALAGIYTEFLM). Over 190 to 200 (KRNNDTLYWQN) the chain is Lumenal. Residues 201 to 217 (LQLYTFGSLFNVARLIA) traverse the membrane as a helical segment. Topologically, residues 218-238 (DDFRHGFEKGPWWQRIFDGYS) are cytoplasmic. Residues 239 to 259 (ITTWLVVLNLGSTGLLVSWLM) traverse the membrane as a helical segment. At 260–282 (KYADNIVKVYSTSMAMLLTMVAS) the chain is on the lumenal side. Residues 283-303 (IYLFSFKPTLQLFLGIVICIM) form a helical membrane-spanning segment. Residues 304–340 (SLHMYFAPPHTLVDLPVTNEAHAKTLKQVVVEEKTDS) are Cytoplasmic-facing.

Belongs to the nucleotide-sugar transporter family. CMP-Sialate:CMP antiporter (TC 2.A.7.12) subfamily.

The protein localises to the golgi apparatus membrane. In terms of biological role, essential protein. Sugar transporter involved in the transport of CMP-sialic acid from the cytoplasm into the Golgi. This Arabidopsis thaliana (Mouse-ear cress) protein is CMP-sialic acid transporter 1.